We begin with the raw amino-acid sequence, 284 residues long: 4-hydroxybenzoate octaprenyltransferase (284 aa).

Transmembrane regions (helical) follow at residues 19-39 (IPIL…SHGL), 42-62 (ISYL…GCII), 85-105 (GQLS…VAFI), 107-127 (VLFL…LAIL), 134-154 (FFAI…FMAF), 165-185 (AWIF…IYAL), 211-231 (ILLF…YCDF), 233-253 (SFFY…YFLY), and 261-281 (CINA…MAVI).

The protein belongs to the UbiA prenyltransferase family. The cofactor is Mg(2+).

The protein localises to the cell inner membrane. It catalyses the reaction all-trans-octaprenyl diphosphate + 4-hydroxybenzoate = 4-hydroxy-3-(all-trans-octaprenyl)benzoate + diphosphate. The protein operates within cofactor biosynthesis; ubiquinone biosynthesis. Its function is as follows. Catalyzes the prenylation of para-hydroxybenzoate (PHB) with an all-trans polyprenyl group. Mediates the second step in the final reaction sequence of ubiquinone-8 (UQ-8) biosynthesis, which is the condensation of the polyisoprenoid side chain with PHB, generating the first membrane-bound Q intermediate 3-octaprenyl-4-hydroxybenzoate. The polypeptide is 4-hydroxybenzoate octaprenyltransferase (Francisella tularensis subsp. novicida (strain U112)).